A 145-amino-acid chain; its full sequence is Cell division protein SepF (145 aa).

Residues 23–41 (PQEVSKTKDENAKPKHETP) are compositionally biased toward basic and acidic residues. Positions 23 to 42 (PQEVSKTKDENAKPKHETPK) are disordered.

The protein belongs to the SepF family. In terms of assembly, homodimer. Interacts with FtsZ.

It localises to the cytoplasm. Its function is as follows. Cell division protein that is part of the divisome complex and is recruited early to the Z-ring. Probably stimulates Z-ring formation, perhaps through the cross-linking of FtsZ protofilaments. Its function overlaps with FtsA. This chain is Cell division protein SepF, found in Caldicellulosiruptor bescii (strain ATCC BAA-1888 / DSM 6725 / KCTC 15123 / Z-1320) (Anaerocellum thermophilum).